Consider the following 683-residue polypeptide: Transforming growth factor-beta-induced protein ig-h3 (683 aa).

The signal sequence occupies residues 1-23 (MALLMRLLTLALALSVGPAGTLA). Phosphoserine is present on serine 37. Residues 45-99 (GPNVCAVQKVIGTNKKYFTNCKQWYQRKICGKSTVISYECCPGYEKVPGEKGCPA) form the EMI domain. 5 cysteine pairs are disulfide-bonded: cysteine 49–cysteine 85, cysteine 74–cysteine 339, cysteine 84–cysteine 97, cysteine 214–cysteine 317, and cysteine 473–cysteine 478. Cysteine 65 is subject to S-cysteinyl cysteine. 4 consecutive FAS1 domains span residues 103 to 236 (LSNL…DKVI), 240 to 371 (TNNI…DELL), 375 to 498 (SAKT…DRML), and 502 to 632 (MGTV…NTVL). Positions 642-644 (RGD) match the Cell attachment site motif.

As to quaternary structure, binds to type I, II, and IV collagens. Post-translationally, gamma-carboxylation is controversial. Gamma-carboxyglutamated; gamma-carboxyglutamate residues are formed by vitamin K dependent carboxylation; this may be required for calcium binding. According to a more recent report, does not contain vitamin K-dependent gamma-carboxyglutamate residues. The EMI domain contains 2 expected intradomain disulfide bridges (Cys-49-Cys85 and Cys-84-Cys-97) and one unusual interdomain disulfide bridge to the second FAS1 domain (Cys-74-Cys-339). This arrangement violates the predicted disulfide bridge pattern of an EMI domain. Expressed in heart, kidney, liver, skeletal muscle, testis, thyroid and uterus.

Its subcellular location is the secreted. The protein resides in the extracellular space. It is found in the extracellular matrix. Its function is as follows. Plays a role in cell adhesion. May play a role in cell-collagen interactions. The sequence is that of Transforming growth factor-beta-induced protein ig-h3 (Tgfbi) from Mus musculus (Mouse).